Reading from the N-terminus, the 374-residue chain is Glutamate 5-kinase (374 aa).

Residue K16 participates in ATP binding. The substrate site is built by S56, D143, and N155. ATP-binding positions include 175–176 and 217–223; these read TD and SGGMLTK. A PUA domain is found at 282 to 360; that stretch reads RGALILDDGA…SNIGAILGYK (79 aa).

The protein belongs to the glutamate 5-kinase family.

Its subcellular location is the cytoplasm. It carries out the reaction L-glutamate + ATP = L-glutamyl 5-phosphate + ADP. It functions in the pathway amino-acid biosynthesis; L-proline biosynthesis; L-glutamate 5-semialdehyde from L-glutamate: step 1/2. Functionally, catalyzes the transfer of a phosphate group to glutamate to form L-glutamate 5-phosphate. The polypeptide is Glutamate 5-kinase (Marinomonas sp. (strain MWYL1)).